The following is a 993-amino-acid chain: P3N-PIPO polyprotein (993 aa).

The region spanning 154–298 (GVTPYSVQQL…ESTMLSTHHY (145 aa)) is the Peptidase S30 domain. Active-site for P1 proteinase activity residues include His-207, Asp-216, and Ser-249. The short motif at 349 to 352 (KITC) is the Involved in interaction with stylet and aphid transmission element. An Involved in virions binding and aphid transmission motif is present at residues 607 to 609 (PTK). Residues 633–755 (MYIAKSGYCY…DSEMKHYRVG (123 aa)) form the Peptidase C6 domain. Residues Cys-641 and His-714 each act as for helper component proteinase activity in the active site.

Belongs to the potyviridae P3N-PIPO polyprotein family. As to quaternary structure, interacts (via PIPO domain) with host PCaP1 protein; this interaction may help to anchor the movement complex to the plasma membrane from which the complex could move to the plasmodesmata. In terms of processing, potyviral RNA is expressed as two polyproteins which undergo post-translational proteolytic processing. Genome polyprotein is processed by NIa-pro, P1 and HC-pro proteinases resulting in the production of at least ten individual proteins. P3N-PIPO is cleaved by P1 and HC-pro proteinases resulting in the production of three individual proteins. The P1 proteinase and the HC-pro cleave only their respective C-termini autocatalytically.

It localises to the host cell junction. The protein localises to the host plasmodesma. The catalysed reaction is Hydrolyzes a Gly-|-Gly bond at its own C-terminus, commonly in the sequence -Tyr-Xaa-Val-Gly-|-Gly, in the processing of the potyviral polyprotein.. Required for aphid transmission and also has proteolytic activity. Only cleaves a Gly-Gly dipeptide at its own C-terminus. Interacts with virions and aphid stylets. Acts as a suppressor of RNA-mediated gene silencing, also known as post-transcriptional gene silencing (PTGS), a mechanism of plant viral defense that limits the accumulation of viral RNAs. May have RNA-binding activity. Its function is as follows. Allows efficient cell to cell propagation, by bypassing the host cell wall barrier. Transports viral genome to neighboring plant cells directly through plasmosdesmata, without any budding. This Solanum betaceum (Tamarillo) protein is P3N-PIPO polyprotein.